Reading from the N-terminus, the 335-residue chain is Glyceraldehyde-3-phosphate dehydrogenase (335 aa).

Residues 10–11 (RI), Asp-33, Arg-77, and Ser-119 each bind NAD(+). D-glyceraldehyde 3-phosphate is bound by residues 150–152 (SCT), Thr-181, 210–211 (TG), and Arg-233. Cys-151 acts as the Nucleophile in catalysis. An NAD(+)-binding site is contributed by Asn-315.

It belongs to the glyceraldehyde-3-phosphate dehydrogenase family. As to quaternary structure, homotetramer.

Its subcellular location is the cytoplasm. The catalysed reaction is D-glyceraldehyde 3-phosphate + phosphate + NAD(+) = (2R)-3-phospho-glyceroyl phosphate + NADH + H(+). The protein operates within carbohydrate degradation; glycolysis; pyruvate from D-glyceraldehyde 3-phosphate: step 1/5. Catalyzes the oxidative phosphorylation of glyceraldehyde 3-phosphate (G3P) to 1,3-bisphosphoglycerate (BPG) using the cofactor NAD. The first reaction step involves the formation of a hemiacetal intermediate between G3P and a cysteine residue, and this hemiacetal intermediate is then oxidized to a thioester, with concomitant reduction of NAD to NADH. The reduced NADH is then exchanged with the second NAD, and the thioester is attacked by a nucleophilic inorganic phosphate to produce BPG. This Chlamydia pneumoniae (Chlamydophila pneumoniae) protein is Glyceraldehyde-3-phosphate dehydrogenase (gap).